The following is a 328-amino-acid chain: Alanine racemase (328 aa).

K33 serves as the catalytic Proton acceptor; specific for D-alanine. At K33 the chain carries N6-(pyridoxal phosphate)lysine. R118 lines the substrate pocket. The active-site Proton acceptor; specific for L-alanine is the Y237. M283 contributes to the substrate binding site.

It belongs to the alanine racemase family. The cofactor is pyridoxal 5'-phosphate.

The enzyme catalyses L-alanine = D-alanine. The protein operates within amino-acid biosynthesis; D-alanine biosynthesis; D-alanine from L-alanine: step 1/1. Functionally, catalyzes the interconversion of L-alanine and D-alanine. May also act on other amino acids. In Campylobacter jejuni subsp. jejuni serotype O:2 (strain ATCC 700819 / NCTC 11168), this protein is Alanine racemase (alr).